The primary structure comprises 308 residues: Coenzyme PQQ synthesis protein B (308 aa).

The protein belongs to the PqqB family.

Its pathway is cofactor biosynthesis; pyrroloquinoline quinone biosynthesis. May be involved in the transport of PQQ or its precursor to the periplasm. This chain is Coenzyme PQQ synthesis protein B, found in Klebsiella pneumoniae subsp. pneumoniae (strain ATCC 700721 / MGH 78578).